We begin with the raw amino-acid sequence, 705 residues long: Polyribonucleotide nucleotidyltransferase (705 aa).

Mg(2+) is bound by residues Asp-486 and Asp-492. In terms of domain architecture, KH spans 553-612; the sequence is PRIYTMKINPEKIKDVIGKGGSVIRALTDETGTTIEIEDDGTIKIAATDGDKAKHAIRRI. Residues 622–690 form the S1 motif domain; the sequence is GRIYAGKVTR…RQGRIRLSIK (69 aa).

The protein belongs to the polyribonucleotide nucleotidyltransferase family. In terms of assembly, component of the RNA degradosome, which is a multiprotein complex involved in RNA processing and mRNA degradation. Mg(2+) serves as cofactor.

It localises to the cytoplasm. The enzyme catalyses RNA(n+1) + phosphate = RNA(n) + a ribonucleoside 5'-diphosphate. Its function is as follows. Involved in mRNA degradation. Catalyzes the phosphorolysis of single-stranded polyribonucleotides processively in the 3'- to 5'-direction. The sequence is that of Polyribonucleotide nucleotidyltransferase from Yersinia pseudotuberculosis serotype O:3 (strain YPIII).